We begin with the raw amino-acid sequence, 498 residues long: Guanosine-5'-triphosphate,3'-diphosphate pyrophosphatase (498 aa).

It belongs to the GppA/Ppx family. GppA subfamily.

It catalyses the reaction guanosine 3'-diphosphate 5'-triphosphate + H2O = guanosine 3',5'-bis(diphosphate) + phosphate + H(+). Its pathway is purine metabolism; ppGpp biosynthesis; ppGpp from GTP: step 2/2. Functionally, catalyzes the conversion of pppGpp to ppGpp. Guanosine pentaphosphate (pppGpp) is a cytoplasmic signaling molecule which together with ppGpp controls the 'stringent response', an adaptive process that allows bacteria to respond to amino acid starvation, resulting in the coordinated regulation of numerous cellular activities. The chain is Guanosine-5'-triphosphate,3'-diphosphate pyrophosphatase from Pectobacterium atrosepticum (strain SCRI 1043 / ATCC BAA-672) (Erwinia carotovora subsp. atroseptica).